The chain runs to 590 residues: Arginine--tRNA ligase, cytoplasmic (590 aa).

Ala-2 is modified (N-acetylalanine). L-arginine is bound by residues 137 to 139 (SPN), His-148, Tyr-322, Asp-326, and Gln-350. The 'HIGH' region motif lies at 138 to 149 (PNIAKEMHVGHL). The interval 470 to 484 (DTAVYLLYAHARICS) is interaction with tRNA.

This sequence belongs to the class-I aminoacyl-tRNA synthetase family.

The protein localises to the cytoplasm. It is found in the cytosol. The enzyme catalyses tRNA(Arg) + L-arginine + ATP = L-arginyl-tRNA(Arg) + AMP + diphosphate. Its function is as follows. Forms part of a macromolecular complex that catalyzes the attachment of specific amino acids to cognate tRNAs during protein synthesis. This Arabidopsis thaliana (Mouse-ear cress) protein is Arginine--tRNA ligase, cytoplasmic.